The following is a 516-amino-acid chain: Putative sel1-like repeat-containing protein R850 (516 aa).

Sel1-like repeat units follow at residues 103 to 138 and 230 to 265; these read ALTY…NMNS and SISQ…KQGD.

This chain is Putative sel1-like repeat-containing protein R850, found in Acanthamoeba polyphaga (Amoeba).